Reading from the N-terminus, the 185-residue chain is Large ribosomal subunit protein uL5 (185 aa).

The protein belongs to the universal ribosomal protein uL5 family. In terms of assembly, part of the 50S ribosomal subunit; part of the 5S rRNA/L5/L18/L25 subcomplex. Contacts the 5S rRNA and the P site tRNA. Forms a bridge to the 30S subunit in the 70S ribosome.

Functionally, this is one of the proteins that bind and probably mediate the attachment of the 5S RNA into the large ribosomal subunit, where it forms part of the central protuberance. In the 70S ribosome it contacts protein S13 of the 30S subunit (bridge B1b), connecting the 2 subunits; this bridge is implicated in subunit movement. Contacts the P site tRNA; the 5S rRNA and some of its associated proteins might help stabilize positioning of ribosome-bound tRNAs. This chain is Large ribosomal subunit protein uL5, found in Sinorhizobium medicae (strain WSM419) (Ensifer medicae).